The sequence spans 145 residues: uncharacterized protein (145 aa).

This is an uncharacterized protein from Synechocystis sp. (strain ATCC 27184 / PCC 6803 / Kazusa).